The following is a 308-amino-acid chain: Glycine--tRNA ligase alpha subunit (308 aa).

It belongs to the class-II aminoacyl-tRNA synthetase family. In terms of assembly, tetramer of two alpha and two beta subunits.

The protein localises to the cytoplasm. The enzyme catalyses tRNA(Gly) + glycine + ATP = glycyl-tRNA(Gly) + AMP + diphosphate. In Streptococcus pyogenes serotype M3 (strain SSI-1), this protein is Glycine--tRNA ligase alpha subunit.